Here is a 394-residue protein sequence, read N- to C-terminus: Phosphopentomutase (394 aa).

Mn(2+) contacts are provided by D14, D287, H292, D328, H329, and H340.

It belongs to the phosphopentomutase family. The cofactor is Mn(2+).

It localises to the cytoplasm. It catalyses the reaction 2-deoxy-alpha-D-ribose 1-phosphate = 2-deoxy-D-ribose 5-phosphate. The enzyme catalyses alpha-D-ribose 1-phosphate = D-ribose 5-phosphate. Its pathway is carbohydrate degradation; 2-deoxy-D-ribose 1-phosphate degradation; D-glyceraldehyde 3-phosphate and acetaldehyde from 2-deoxy-alpha-D-ribose 1-phosphate: step 1/2. Functionally, isomerase that catalyzes the conversion of deoxy-ribose 1-phosphate (dRib-1-P) and ribose 1-phosphate (Rib-1-P) to deoxy-ribose 5-phosphate (dRib-5-P) and ribose 5-phosphate (Rib-5-P), respectively. The chain is Phosphopentomutase from Listeria monocytogenes serotype 4b (strain CLIP80459).